A 38-amino-acid polypeptide reads, in one-letter code: Natriuretic peptide DNP (38 aa).

A disulfide bridge connects residues C7 and C23. Positions 19-38 (SNLGCPSLRDPRPNAPSTSA) are disordered.

This sequence belongs to the natriuretic peptide family. As to expression, expressed by the venom gland.

The protein localises to the secreted. Exhibits vasodilator, natriuretic and diuretic properties in animal models and human tissues. Acts by stimulating cGMP via the natriuretic peptide receptor 1 (NPR1). Is a poor agonist of the atrial natriuretic peptide receptor 2 (NPR2). Is not degraded by neutral endopeptidase (NEP/MME). Binds to atrial natriuretic peptide clearance receptor (NPR-C/NPR3), which may be responsible of the removal of DNP from the circulation. Increases calcium uptake and induces histamine release from rat peritoneal mast cells. Increases calcium-activated potassium (KCa) current in gastric antral circular smooth muscle cells by increasing cGMP production and activating inositol trisphosphate receptors (IP3Rs). In vivo, reduces both systolic and diastolic blood pressure with no effect on heart rate, when intravenously injected in conscious rabbits. This Dendroaspis angusticeps (Eastern green mamba) protein is Natriuretic peptide DNP.